Reading from the N-terminus, the 286-residue chain is Puff II/9-1 protein (286 aa).

Residues 1–19 (MKQFIVLTVVLLAIQELQG) form the signal peptide. Residues 61–235 (ITAIKKDNDF…ENALNTLRCE (175 aa)) form a helical region. N-linked (GlcNAc...) asparagine glycosylation occurs at Asn-156.

This Bradysia coprophila (Dark-winged fungus gnat) protein is Puff II/9-1 protein (II/9-1).